Here is a 578-residue protein sequence, read N- to C-terminus: Arginine--tRNA ligase (578 aa).

The 'HIGH' region signature appears at 127–137 (PNLAKEMHVGH).

This sequence belongs to the class-I aminoacyl-tRNA synthetase family. Monomer.

It is found in the cytoplasm. It catalyses the reaction tRNA(Arg) + L-arginine + ATP = L-arginyl-tRNA(Arg) + AMP + diphosphate. This is Arginine--tRNA ligase from Pseudomonas putida (strain GB-1).